A 263-amino-acid chain; its full sequence is MTRIDDTFARLSASGKKAFVSYIMAGDPDYATSLEVMRGLPAAGVDIIELGLPFTDPMADGSTIQLAGQRALDGGMTLDKTLQMVRDFRAGDDTTPIVLMGYYNPIYSRGVDRFLTDAREAGIDGLIVVDLPPEEDEELCIPAQAAGLNFIRLATPTTDDARLPAVLSNTSGFLYYVSITGITGAAAPQAADVAPEVARIKSATDIPVIVGFGITTSEAARTIAGVADGCVVGSAIVSRIAEGEPVADVLAFVKSLSDGAHAA.

Residues E49 and D60 each act as proton acceptor in the active site.

This sequence belongs to the TrpA family. Tetramer of two alpha and two beta chains.

It catalyses the reaction (1S,2R)-1-C-(indol-3-yl)glycerol 3-phosphate + L-serine = D-glyceraldehyde 3-phosphate + L-tryptophan + H2O. Its pathway is amino-acid biosynthesis; L-tryptophan biosynthesis; L-tryptophan from chorismate: step 5/5. The alpha subunit is responsible for the aldol cleavage of indoleglycerol phosphate to indole and glyceraldehyde 3-phosphate. The sequence is that of Tryptophan synthase alpha chain from Jannaschia sp. (strain CCS1).